The chain runs to 134 residues: ATP synthase epsilon chain (134 aa).

Belongs to the ATPase epsilon chain family. As to quaternary structure, F-type ATPases have 2 components, CF(1) - the catalytic core - and CF(0) - the membrane proton channel. CF(1) has five subunits: alpha(3), beta(3), gamma(1), delta(1), epsilon(1). CF(0) has three main subunits: a, b and c.

It localises to the cell inner membrane. In terms of biological role, produces ATP from ADP in the presence of a proton gradient across the membrane. This Nitratidesulfovibrio vulgaris (strain DSM 19637 / Miyazaki F) (Desulfovibrio vulgaris) protein is ATP synthase epsilon chain.